The chain runs to 450 residues: uncharacterized protein (450 aa).

A run of 12 helical transmembrane segments spans residues 10-30 (IIVL…LVIA), 53-73 (LGGG…AIAI), 95-115 (TAGN…LFAI), 120-140 (LLPV…SIFN), 148-168 (AVAC…PVGF), 199-219 (LAML…IFIT), 242-262 (IANI…ATFA), 267-287 (TSST…CGIF), 302-322 (LMAM…VINA), 343-363 (IAAL…GSSF), 378-398 (LSFG…AALG), and 428-448 (VVPT…IAAM).

It localises to the cell membrane. This is an uncharacterized protein from Haemophilus influenzae (strain ATCC 51907 / DSM 11121 / KW20 / Rd).